The primary structure comprises 215 residues: MVLLQIIASQSYSIEVDEHSSLGNIFDLLSDQGILPKNAKSLHAFYYHGTRLNMNMTCADYGIIHDSAVHIAPLPSSCDIDFKDYSTSAFHLHFSPLTPNHASTEAVSNFKQSSTIPSISKSNLTNPPLESEKSSDKALLTRPATSRRRCCHPTCTRITLRLAGNCLHCNGRFCAAHRLMEDHDCVALFSLRKEEHERNRIKLEKEHGDTLISKV.

The segment covering 116 to 128 (IPSISKSNLTNPP) has biased composition (polar residues). A disordered region spans residues 116–138 (IPSISKSNLTNPPLESEKSSDKA). An AN1-type zinc finger spans residues 144 to 193 (ATSRRRCCHPTCTRITLRLAGNCLHCNGRFCAAHRLMEDHDCVALFSLRK). Residues cysteine 150, cysteine 155, cysteine 166, cysteine 169, cysteine 174, histidine 177, histidine 183, and cysteine 185 each coordinate Zn(2+).

The protein resides in the cytoplasm. It localises to the nucleus. This chain is AN1-type zinc finger protein C1271.05c, found in Schizosaccharomyces pombe (strain 972 / ATCC 24843) (Fission yeast).